A 550-amino-acid chain; its full sequence is Nucleoside hydrolase 4 (550 aa).

It belongs to the IUNH family.

It is found in the cytoplasm. Its function is as follows. May be involved in the degradation of nucleosides. This chain is Nucleoside hydrolase 4, found in Arabidopsis thaliana (Mouse-ear cress).